Reading from the N-terminus, the 343-residue chain is Thromboxane A2 receptor (343 aa).

The Extracellular portion of the chain corresponds to 1-29; sequence MWPNGSSLGPCFRPTNITLEERRLIASPW. 2 N-linked (GlcNAc...) asparagine glycosylation sites follow: Asn4 and Asn16. Residues 30 to 52 traverse the membrane as a helical segment; that stretch reads FAASFCVVGLASNLLALSVLAGA. At 53–66 the chain is on the cytoplasmic side; it reads RQGGSHTRSSFLTF. Residues 67–87 form a helical membrane-spanning segment; sequence LCGLVLTDFLGLLVTGAIVVS. Over 88–106 the chain is Extracellular; it reads QHAALFEWHAVDPGCRLCR. Cys105 and Cys183 are joined by a disulfide. The chain crosses the membrane as a helical span at residues 107–128; sequence FMGVVMIFFGLSPLLLGATMAS. The Cytoplasmic portion of the chain corresponds to 129–149; sequence ERFLGITRPFSRPVVTSQRRA. Residues 150-172 traverse the membrane as a helical segment; sequence WATVGLVWAAALALGLLPLLGLG. Residues 173–193 lie on the Extracellular side of the membrane; that stretch reads RYTVQYPGSWCFLTLGAESGD. A helical transmembrane segment spans residues 194–219; that stretch reads VAFGLLFSMLGGLSVGLSFLLNTVSV. Residues 220–246 lie on the Cytoplasmic side of the membrane; it reads ATLCHVYHGQEAAQQRPRDSEVEMMAQ. The helical transmembrane segment at 247 to 270 threads the bilayer; that stretch reads LLGIMLVASVCWLPLLVFIAQTVL. The Extracellular segment spans residues 271-289; sequence RNPPAMSPSGQLSRATEQE. Residues 290–311 form a helical membrane-spanning segment; it reads LLIYLRVATWNQILDPWVYILF. Topologically, residues 312–343 are cytoplasmic; sequence RRAVLRRLQPRLSTRPRSLSLQPQLTQRSGLQ. Phosphoserine is present on residues Ser329 and Ser331.

It belongs to the G-protein coupled receptor 1 family. Interacts with RPGRIP1L. Interacts with RACK1; the interaction regulates TBXA2R cell surface expression.

The protein localises to the cell membrane. Its function is as follows. Receptor for thromboxane A2 (TXA2), a potent stimulator of platelet aggregation. The activity of this receptor is mediated by a G-protein that activates a phosphatidylinositol-calcium second messenger system. In the kidney, the binding of TXA2 to glomerular TP receptors causes intense vasoconstriction. Activates phospholipase C and adenylyl cyclase. The chain is Thromboxane A2 receptor (TBXA2R) from Chlorocebus aethiops (Green monkey).